A 149-amino-acid polypeptide reads, in one-letter code: Transcriptional repressor NrdR (149 aa).

A zinc finger lies at 3–34 (CPFCSATDTKVIDSRLVADGHQVRRRRECTLC). The ATP-cone domain occupies 49–139 (PRVIKRDDTR…VYRAFEDVSQ (91 aa)).

It belongs to the NrdR family. Zn(2+) serves as cofactor.

Functionally, negatively regulates transcription of bacterial ribonucleotide reductase nrd genes and operons by binding to NrdR-boxes. This is Transcriptional repressor NrdR from Shewanella denitrificans (strain OS217 / ATCC BAA-1090 / DSM 15013).